A 491-amino-acid chain; its full sequence is La-related protein 6 (491 aa).

The segment at M1–P87 is disordered. Residue A2 is modified to N-acetylalanine. A compositionally biased stretch (acidic residues) spans E24–G37. Phosphoserine occurs at positions 56 and 58. An HTH La-type RNA-binding domain is found at K86–P177. One can recognise an RRM domain in the interval K184–P296. Residues L186–L193 carry the Nuclear export signal motif. 2 disordered regions span residues M293 to R403 and S423 to V491. A Nuclear localization signal motif is present at residues P296–K302. A compositionally biased stretch (low complexity) spans D332 to P346. Composition is skewed to polar residues over residues N359–L386 and Q444–L453. The SUZ-C domain maps to P427–E485. The segment covering H482–V491 has biased composition (basic and acidic residues).

Interacts (via the HTH domain) with VIM/vimentin. Interacts (via C-terminus) with non-muscle myosin MYH10. Interacts (via C-terminus) with DHX9. In terms of tissue distribution, expressed in numerous tissues.

It is found in the cytoplasm. The protein resides in the nucleus. Its function is as follows. Regulates the coordinated translation of type I collagen alpha-1 and alpha-2 mRNAs, CO1A1 and CO1A2. Stabilizes mRNAs through high-affinity binding of a stem-loop structure in their 5' UTR. This regulation requires VIM and MYH10 filaments, and the helicase DHX9. This chain is La-related protein 6 (LARP6), found in Homo sapiens (Human).